A 152-amino-acid polypeptide reads, in one-letter code: Vasotocin-neurophysin VT 1 (152 aa).

Positions 1–19 (MSDSFLPTCILCLLALSSA) are cleaved as a signal peptide. Cys-20 and Cys-25 are oxidised to a cystine. Glycine amide is present on Gly-28. 7 disulfide bridges follow: Cys-40–Cys-84, Cys-43–Cys-57, Cys-51–Cys-74, Cys-58–Cys-64, Cys-91–Cys-103, Cys-97–Cys-115, and Cys-104–Cys-109.

This sequence belongs to the vasopressin/oxytocin family.

The protein localises to the secreted. In terms of biological role, vasotocin is an antidiuretic hormone. The sequence is that of Vasotocin-neurophysin VT 1 from Catostomus commersonii (White sucker).